The primary structure comprises 94 residues: Pyrimidine/purine nucleoside phosphorylase (94 aa).

This sequence belongs to the nucleoside phosphorylase PpnP family.

It carries out the reaction a purine D-ribonucleoside + phosphate = a purine nucleobase + alpha-D-ribose 1-phosphate. The enzyme catalyses adenosine + phosphate = alpha-D-ribose 1-phosphate + adenine. The catalysed reaction is cytidine + phosphate = cytosine + alpha-D-ribose 1-phosphate. It catalyses the reaction guanosine + phosphate = alpha-D-ribose 1-phosphate + guanine. It carries out the reaction inosine + phosphate = alpha-D-ribose 1-phosphate + hypoxanthine. The enzyme catalyses thymidine + phosphate = 2-deoxy-alpha-D-ribose 1-phosphate + thymine. The catalysed reaction is uridine + phosphate = alpha-D-ribose 1-phosphate + uracil. It catalyses the reaction xanthosine + phosphate = alpha-D-ribose 1-phosphate + xanthine. In terms of biological role, catalyzes the phosphorolysis of diverse nucleosides, yielding D-ribose 1-phosphate and the respective free bases. Can use uridine, adenosine, guanosine, cytidine, thymidine, inosine and xanthosine as substrates. Also catalyzes the reverse reactions. This is Pyrimidine/purine nucleoside phosphorylase from Salmonella newport (strain SL254).